The following is a 767-amino-acid chain: 5-methyltetrahydropteroyltriglutamate--homocysteine methyltransferase (767 aa).

5-methyltetrahydropteroyltri-L-glutamate contacts are provided by residues 16-19 and K122; that span reads RELK. Residues 443 to 445 and E496 contribute to the L-homocysteine site; that span reads IGS. L-methionine-binding positions include 443–445 and E496; that span reads IGS. 5-methyltetrahydropteroyltri-L-glutamate contacts are provided by residues 527-528 and W573; that span reads RC. D611 is an L-homocysteine binding site. Residue D611 coordinates L-methionine. E617 provides a ligand contact to 5-methyltetrahydropteroyltri-L-glutamate. Positions 653, 655, and 677 each coordinate Zn(2+). H706 (proton donor) is an active-site residue. C738 contributes to the Zn(2+) binding site.

This sequence belongs to the vitamin-B12 independent methionine synthase family. It depends on Zn(2+) as a cofactor.

It carries out the reaction 5-methyltetrahydropteroyltri-L-glutamate + L-homocysteine = tetrahydropteroyltri-L-glutamate + L-methionine. It functions in the pathway amino-acid biosynthesis; L-methionine biosynthesis via de novo pathway; L-methionine from L-homocysteine (MetE route): step 1/1. Functionally, catalyzes the transfer of a methyl group from 5-methyltetrahydrofolate to homocysteine resulting in methionine formation. The sequence is that of 5-methyltetrahydropteroyltriglutamate--homocysteine methyltransferase from Ectopseudomonas mendocina (strain ymp) (Pseudomonas mendocina).